Consider the following 169-residue polypeptide: Gamma-crystallin 2 (169 aa).

Beta/gamma crystallin 'Greek key' domains lie at 1 to 34 and 35 to 77; these read YEDR…KVDS and GCWM…KVIP. Positions 78 to 82 are connecting peptide; it reads QQKGP. 2 Beta/gamma crystallin 'Greek key' domains span residues 83 to 123 and 124 to 166; these read HKMK…NVLE and GHWI…RRVL.

Belongs to the beta/gamma-crystallin family. As to quaternary structure, monomer.

Its function is as follows. Crystallins are the dominant structural components of the vertebrate eye lens. The chain is Gamma-crystallin 2 from Rana temporaria (European common frog).